The sequence spans 311 residues: Lipoyl synthase (311 aa).

[4Fe-4S] cluster is bound by residues Cys-47, Cys-52, Cys-58, Cys-73, Cys-77, Cys-80, and Ser-287. The Radical SAM core domain occupies 59 to 276; it reads WTKKHATVMI…AQIARAKGFL (218 aa).

The protein belongs to the radical SAM superfamily. Lipoyl synthase family. The cofactor is [4Fe-4S] cluster.

It is found in the cytoplasm. It catalyses the reaction [[Fe-S] cluster scaffold protein carrying a second [4Fe-4S](2+) cluster] + N(6)-octanoyl-L-lysyl-[protein] + 2 oxidized [2Fe-2S]-[ferredoxin] + 2 S-adenosyl-L-methionine + 4 H(+) = [[Fe-S] cluster scaffold protein] + N(6)-[(R)-dihydrolipoyl]-L-lysyl-[protein] + 4 Fe(3+) + 2 hydrogen sulfide + 2 5'-deoxyadenosine + 2 L-methionine + 2 reduced [2Fe-2S]-[ferredoxin]. Its pathway is protein modification; protein lipoylation via endogenous pathway; protein N(6)-(lipoyl)lysine from octanoyl-[acyl-carrier-protein]: step 2/2. Catalyzes the radical-mediated insertion of two sulfur atoms into the C-6 and C-8 positions of the octanoyl moiety bound to the lipoyl domains of lipoate-dependent enzymes, thereby converting the octanoylated domains into lipoylated derivatives. The protein is Lipoyl synthase of Sphingopyxis alaskensis (strain DSM 13593 / LMG 18877 / RB2256) (Sphingomonas alaskensis).